Here is a 262-residue protein sequence, read N- to C-terminus: Cytochrome c oxidase subunit 3 (262 aa).

Transmembrane regions (helical) follow at residues 13-33 (PWPL…VMYM), 38-58 (GGGL…YVWW), 82-102 (GMLL…WAFF), 134-154 (TIIL…ILAG), 159-179 (GIIS…FQAL), 200-220 (ATGF…VCLF), and 237-257 (AAAW…VCIY).

This sequence belongs to the cytochrome c oxidase subunit 3 family. As to quaternary structure, component of the cytochrome c oxidase (complex IV, CIV), a multisubunit enzyme composed of a catalytic core of 3 subunits and several supernumerary subunits. The complex exists as a monomer or a dimer and forms supercomplexes (SCs) in the inner mitochondrial membrane with ubiquinol-cytochrome c oxidoreductase (cytochrome b-c1 complex, complex III, CIII).

It localises to the mitochondrion inner membrane. The enzyme catalyses 4 Fe(II)-[cytochrome c] + O2 + 8 H(+)(in) = 4 Fe(III)-[cytochrome c] + 2 H2O + 4 H(+)(out). Component of the cytochrome c oxidase, the last enzyme in the mitochondrial electron transport chain which drives oxidative phosphorylation. The respiratory chain contains 3 multisubunit complexes succinate dehydrogenase (complex II, CII), ubiquinol-cytochrome c oxidoreductase (cytochrome b-c1 complex, complex III, CIII) and cytochrome c oxidase (complex IV, CIV), that cooperate to transfer electrons derived from NADH and succinate to molecular oxygen, creating an electrochemical gradient over the inner membrane that drives transmembrane transport and the ATP synthase. Cytochrome c oxidase is the component of the respiratory chain that catalyzes the reduction of oxygen to water. Electrons originating from reduced cytochrome c in the intermembrane space (IMS) are transferred via the dinuclear copper A center (CU(A)) of subunit 2 and heme A of subunit 1 to the active site in subunit 1, a binuclear center (BNC) formed by heme A3 and copper B (CU(B)). The BNC reduces molecular oxygen to 2 water molecules using 4 electrons from cytochrome c in the IMS and 4 protons from the mitochondrial matrix. The polypeptide is Cytochrome c oxidase subunit 3 (COX3) (Prototheca wickerhamii).